We begin with the raw amino-acid sequence, 116 residues long: Large ribosomal subunit protein bL20 (116 aa).

The protein belongs to the bacterial ribosomal protein bL20 family.

Functionally, binds directly to 23S ribosomal RNA and is necessary for the in vitro assembly process of the 50S ribosomal subunit. It is not involved in the protein synthesizing functions of that subunit. In Bacteroides thetaiotaomicron (strain ATCC 29148 / DSM 2079 / JCM 5827 / CCUG 10774 / NCTC 10582 / VPI-5482 / E50), this protein is Large ribosomal subunit protein bL20.